The sequence spans 160 residues: Bacterial microcompartment shell protein PduK (160 aa).

The region spanning 11 to 96 is the BMC domain; that stretch reads SLGLLEVCGL…PGEGILLAET (86 aa).

The protein belongs to the bacterial microcompartments protein family. In terms of assembly, interacts with shell proteins PduA and PduP and assembly protein PduM. It depends on Fe cation as a cofactor.

The protein resides in the bacterial microcompartment. Its pathway is polyol metabolism; 1,2-propanediol degradation. Functionally, a minor shell protein of the bacterial microcompartment (BMC) dedicated to 1,2-propanediol (1,2-PD) degradation. The isolated BMC shell component protein ratio for J:A:B':B:K:T:U is approximately 15:10:7:6:1:1:2. Not required for structural integrity of BMCs nor to mitigate propionaldehyde toxicity, it might be involved in spatial organization of BMCs. In terms of biological role, the 1,2-PD-specific bacterial microcompartment (BMC) concentrates low levels of 1,2-PD catabolic enzymes, concentrates volatile reaction intermediates thus enhancing pathway flux and keeps the level of toxic, mutagenic propionaldehyde low. The sequence is that of Bacterial microcompartment shell protein PduK from Salmonella typhimurium (strain LT2 / SGSC1412 / ATCC 700720).